Here is a 251-residue protein sequence, read N- to C-terminus: tRNA (guanine-N(1)-)-methyltransferase (251 aa).

S-adenosyl-L-methionine contacts are provided by residues glycine 114 and 134 to 139 (IGDYVL).

Belongs to the RNA methyltransferase TrmD family. As to quaternary structure, homodimer.

It localises to the cytoplasm. The enzyme catalyses guanosine(37) in tRNA + S-adenosyl-L-methionine = N(1)-methylguanosine(37) in tRNA + S-adenosyl-L-homocysteine + H(+). Functionally, specifically methylates guanosine-37 in various tRNAs. This is tRNA (guanine-N(1)-)-methyltransferase from Pelotomaculum thermopropionicum (strain DSM 13744 / JCM 10971 / SI).